The primary structure comprises 250 residues: Sulfate transporter CysZ (250 aa).

The next 4 helical transmembrane spans lie at 27–47 (FVVL…YYLF), 64–84 (FLSW…LATF), 150–170 (FLLL…WFLF), and 210–230 (MLVA…PVAV).

The protein belongs to the CysZ family.

The protein localises to the cell inner membrane. Its function is as follows. High affinity, high specificity proton-dependent sulfate transporter, which mediates sulfate uptake. Provides the sulfur source for the cysteine synthesis pathway. The protein is Sulfate transporter CysZ of Vibrio cholerae serotype O1 (strain ATCC 39315 / El Tor Inaba N16961).